Consider the following 119-residue polypeptide: Large ribosomal subunit protein bL20 (119 aa).

This sequence belongs to the bacterial ribosomal protein bL20 family.

Its function is as follows. Binds directly to 23S ribosomal RNA and is necessary for the in vitro assembly process of the 50S ribosomal subunit. It is not involved in the protein synthesizing functions of that subunit. This is Large ribosomal subunit protein bL20 from Shewanella halifaxensis (strain HAW-EB4).